The following is a 158-amino-acid chain: Xanthine-guanine phosphoribosyltransferase (158 aa).

5-phospho-alpha-D-ribose 1-diphosphate is bound by residues 38–39 (RG) and 90–98 (DDLVDTGGT). Asp-91 is a Mg(2+) binding site. Residues Asp-94 and Ile-137 each contribute to the guanine site. 2 residues coordinate xanthine: Asp-94 and Ile-137. Residues 94–98 (DTGGT) and 136–137 (WI) contribute to the GMP site.

Belongs to the purine/pyrimidine phosphoribosyltransferase family. XGPT subfamily. Homotetramer. Mg(2+) serves as cofactor.

It is found in the cell inner membrane. The catalysed reaction is GMP + diphosphate = guanine + 5-phospho-alpha-D-ribose 1-diphosphate. It carries out the reaction XMP + diphosphate = xanthine + 5-phospho-alpha-D-ribose 1-diphosphate. It catalyses the reaction IMP + diphosphate = hypoxanthine + 5-phospho-alpha-D-ribose 1-diphosphate. The protein operates within purine metabolism; GMP biosynthesis via salvage pathway; GMP from guanine: step 1/1. It functions in the pathway purine metabolism; XMP biosynthesis via salvage pathway; XMP from xanthine: step 1/1. Its function is as follows. Purine salvage pathway enzyme that catalyzes the transfer of the ribosyl-5-phosphate group from 5-phospho-alpha-D-ribose 1-diphosphate (PRPP) to the N9 position of the 6-oxopurines guanine and xanthine to form the corresponding ribonucleotides GMP (guanosine 5'-monophosphate) and XMP (xanthosine 5'-monophosphate), with the release of PPi. To a lesser extent, also acts on hypoxanthine. The sequence is that of Xanthine-guanine phosphoribosyltransferase from Buchnera aphidicola subsp. Acyrthosiphon pisum (strain APS) (Acyrthosiphon pisum symbiotic bacterium).